Consider the following 216-residue polypeptide: ATP-dependent Clp protease proteolytic subunit (216 aa).

Serine 101 (nucleophile) is an active-site residue. The active site involves histidine 126.

Belongs to the peptidase S14 family. In terms of assembly, component of the chloroplastic Clp protease core complex.

Its subcellular location is the plastid. It localises to the chloroplast stroma. It carries out the reaction Hydrolysis of proteins to small peptides in the presence of ATP and magnesium. alpha-casein is the usual test substrate. In the absence of ATP, only oligopeptides shorter than five residues are hydrolyzed (such as succinyl-Leu-Tyr-|-NHMec, and Leu-Tyr-Leu-|-Tyr-Trp, in which cleavage of the -Tyr-|-Leu- and -Tyr-|-Trp bonds also occurs).. Cleaves peptides in various proteins in a process that requires ATP hydrolysis. Has a chymotrypsin-like activity. Plays a major role in the degradation of misfolded proteins. This Zea mays (Maize) protein is ATP-dependent Clp protease proteolytic subunit.